The chain runs to 75 residues: UPF0346 protein OB1736 (75 aa).

Belongs to the UPF0346 family.

This is UPF0346 protein OB1736 from Oceanobacillus iheyensis (strain DSM 14371 / CIP 107618 / JCM 11309 / KCTC 3954 / HTE831).